The primary structure comprises 422 residues: MVMVLSESLSTRGADSIACGTFSRELHTPKKMSQGPTLFSCGIMENDRWRDLDRKCPLQIDQPSTSIWECLPEKDSSLWHREAVTACAVTSLIKDLSISDHNGNPSAPPSKRQCRSLSFSDEMSSCRTSWRPLGSKVWTPVEKRRCYSGGSVQRYSNGFSTMQRSSSFSLPSRANVLSSPCDQAGLHHRFGGQPCQGVPGSAPCGQAGDTWSPDLHPVGGGRLDLQRSLSCSHEQFSFVEYCPPSANSTPASTPELARRSSGLSRSRSQPCVLNDKKVGVKRRRPEEVQEQRPSLDLAKMAQNCQTFSSLSCLSAGTEDCGPQSPFARHVSNTRAWTALLSASGPGGRTPAGTPVPEPLPPSFDDHLACQEDLSCEESDSCALDEDCGRRAEPAAAWRDRGAPGNSLCSLDGELDIEQIEKN.

Phosphoserine occurs at positions 118, 167, 169, 179, 212, and 268. Positions 245–268 are enriched in low complexity; sequence SANSTPASTPELARRSSGLSRSRS. A disordered region spans residues 245-269; sequence SANSTPASTPELARRSSGLSRSRSQ. The Nuclear localization signal motif lies at 281-284; the sequence is KRRR.

Belongs to the FAM53 family. Interacts with CTNNB1. Detected in skeletal muscle, kidney, spleen, thyroid, testis, ovary, small intestine, colon and peripheral blood.

It localises to the nucleus. Its function is as follows. Acts as a regulator of Wnt signaling pathway by regulating beta-catenin (CTNNB1) nuclear localization. The polypeptide is Protein FAM53B (Homo sapiens (Human)).